The chain runs to 346 residues: Leucine zipper protein 2 (346 aa).

An N-terminal signal peptide occupies residues 1 to 19; that stretch reads MKFSPAHYLLPLLPALVLS. A coiled-coil region spans residues 16–211; that stretch reads LVLSTRQDYE…QMKAMKETVQ (196 aa). Residue asparagine 133 is glycosylated (N-linked (GlcNAc...) asparagine). The tract at residues 164-192 is leucine-zipper; the sequence is LRYGKKDLLFKAQQLTDLEQKLAVAKNEL. 2 disordered regions span residues 221-240 and 248-346; these read QPPPPLSLITSNPTRMLLPP and PDAA…EKIL. Over residues 250-261 the composition is skewed to low complexity; the sequence is AAAKSKPQQSAS. A compositionally biased stretch (polar residues) spans 262-283; the sequence is GNNESSQVESTKEGNPSTTACD. N-linked (GlcNAc...) asparagine glycosylation is present at asparagine 264. The span at 286–298 shows a compositional bias: basic and acidic residues; that stretch reads DEGRPCSMKHKES. An N-linked (GlcNAc...) asparagine glycan is attached at asparagine 302.

The protein localises to the secreted. This Homo sapiens (Human) protein is Leucine zipper protein 2 (LUZP2).